An 871-amino-acid polypeptide reads, in one-letter code: Synaptonemal complex protein 1 (871 aa).

The disordered stretch occupies residues 1 to 40; that stretch reads MQKLGFPAMKSLDKPRSLSGSANMYSFSNRKPPDSVSSGS. Residues 18 to 40 show a composition bias toward polar residues; it reads LSGSANMYSFSNRKPPDSVSSGS. Coiled coils occupy residues 58–304 and 331–608; these read MRTD…DKKN and LALD…EESK. 2 disordered regions span residues 708–741 and 778–871; these read VMSD…RSEH and SVLS…YAFD. The segment covering 719–728 has biased composition (polar residues); that stretch reads VNSNKNYSIS. Basic and acidic residues predominate over residues 729–741; that stretch reads KDSRLGGSKRSEH. Residues 831-847 show a composition bias toward polar residues; that stretch reads LTPQSIAKGTGMTSHAR.

The protein resides in the nucleus. In terms of biological role, required for chromosome synapsis and normal fidelity of crossing over. The protein is Synaptonemal complex protein 1 (ZYP1A) of Arabidopsis thaliana (Mouse-ear cress).